A 156-amino-acid chain; its full sequence is D-aminoacyl-tRNA deacylase (156 aa).

The Gly-cisPro motif, important for rejection of L-amino acids signature appears at 142-143; that stretch reads GP.

It belongs to the DTD family. Homodimer.

The protein resides in the cytoplasm. The catalysed reaction is glycyl-tRNA(Ala) + H2O = tRNA(Ala) + glycine + H(+). It catalyses the reaction a D-aminoacyl-tRNA + H2O = a tRNA + a D-alpha-amino acid + H(+). An aminoacyl-tRNA editing enzyme that deacylates mischarged D-aminoacyl-tRNAs. Also deacylates mischarged glycyl-tRNA(Ala), protecting cells against glycine mischarging by AlaRS. Acts via tRNA-based rather than protein-based catalysis; rejects L-amino acids rather than detecting D-amino acids in the active site. By recycling D-aminoacyl-tRNA to D-amino acids and free tRNA molecules, this enzyme counteracts the toxicity associated with the formation of D-aminoacyl-tRNA entities in vivo and helps enforce protein L-homochirality. The polypeptide is D-aminoacyl-tRNA deacylase (Cupriavidus metallidurans (strain ATCC 43123 / DSM 2839 / NBRC 102507 / CH34) (Ralstonia metallidurans)).